Here is a 196-residue protein sequence, read N- to C-terminus: Fucoxanthin-chlorophyll a-c binding protein A, chloroplastic (196 aa).

A chloroplast-targeting transit peptide spans 1-31; it reads MKFAVFASLLASRAAFAPAQQSARTSVATNM. A run of 3 helical transmembrane segments spans residues 73 to 94, 114 to 134, and 174 to 196; these read ICMLAVAGYLTQEAGIRLPGDI, VPGAGIAQIIAFIGFFEIAVM, and GRAAQMGILALMVHEQLGVSILP.

Belongs to the fucoxanthin chlorophyll protein family. In terms of assembly, the LHC complex of chromophytic algae is composed of fucoxanthin, chlorophyll A and C bound non-covalently by fucoxanthin chlorophyll proteins (FCPs). The ratio of the pigments in LHC; fucoxanthin: chlorophyll C: chlorophyll A; (0.6-1): (0.1-0.3): (1).

The protein localises to the plastid. The protein resides in the chloroplast thylakoid membrane. The light-harvesting complex (LHC) functions as a light receptor, it captures and delivers excitation energy to photosystems with which it is closely associated. Energy is transferred from the carotenoid and chlorophyll C (or B) to chlorophyll A and the photosynthetic reaction centers where it is used to synthesize ATP and reducing power. In Phaeodactylum tricornutum (Diatom), this protein is Fucoxanthin-chlorophyll a-c binding protein A, chloroplastic (FCPA).